The following is a 240-amino-acid chain: Probable 2-phosphosulfolactate phosphatase (240 aa).

This sequence belongs to the ComB family. Mg(2+) serves as cofactor.

The catalysed reaction is (2R)-O-phospho-3-sulfolactate + H2O = (2R)-3-sulfolactate + phosphate. This chain is Probable 2-phosphosulfolactate phosphatase, found in Clostridium kluyveri (strain NBRC 12016).